A 721-amino-acid chain; its full sequence is Kinesin-like protein KIF2C (721 aa).

The tract at residues 1–250 (MESLHARLFP…CSPLTVTDPI (250 aa)) is globular. Ser-3 and Ser-19 each carry phosphoserine. Ser-92 bears the Phosphoserine; by AURKB mark. Positions 95–98 (SKIP) match the Microtubule tip localization signal motif. Ser-106, Ser-108, Ser-112, Ser-162, Ser-171, Ser-183, and Ser-188 each carry phosphoserine. Positions 164–188 (EAEEQAHSTRSTSSANPGNSVRRKS) are disordered. Positions 171–182 (STRSTSSANPGN) are enriched in polar residues. Residues 203–234 (EKRAQNSELRIKRAQEYDSSFPNWEFARMIKE) form a negative regulator of microtubule-binding region. The 331-residue stretch at 254 to 584 (RICVCVRKRP…LRYADRVKEL (331 aa)) folds into the Kinesin motor domain. ATP contacts are provided by residues Arg-260 and 344–351 (GQTGSGKT). Ser-515 and Ser-626 each carry phosphoserine. Positions 614–652 (GNEEEELSSQMSSFNEAMTQIRELEERALEELREIIQQG) form a coiled coil.

Belongs to the TRAFAC class myosin-kinesin ATPase superfamily. Kinesin family. MCAK/KIF2 subfamily. Interacts with CENPH. Interacts with MTUS2/TIP150; the interaction is direct. Interacts with MAPRE1; the interaction is direct, regulated by phosphorylation and is probably required for targeting to growing microtubule plus ends. Interacts with KIF18B at microtubule tips; this interaction increases the affinity of both partners for microtubule plus ends and is required for robust microtubule depolymerization. Phosphorylation by AURKA or AURKB strongly reduces KIF18B-binding. Phosphorylation by AURKB, regulates association with centromeres and kinetochores and the microtubule depolymerization activity. In terms of processing, ubiquitinated.

It is found in the cytoplasm. It localises to the cytoskeleton. Its subcellular location is the nucleus. The protein localises to the chromosome. The protein resides in the centromere. It is found in the kinetochore. In terms of biological role, in complex with KIF18B, constitutes the major microtubule plus-end depolymerizing activity in mitotic cells. Regulates the turnover of microtubules at the kinetochore and functions in chromosome segregation during mitosis. Plays a role in chromosome congression and is required for the lateral to end-on conversion of the chromosome-microtubule attachment. The protein is Kinesin-like protein KIF2C (Kif2c) of Mus musculus (Mouse).